The chain runs to 168 residues: Prespore-specific protein A (168 aa).

The signal sequence occupies residues 1–19 (MKFQHTFIALLSLLTYANA). 13 O-linked (GlcNAc) threonine glycosylation sites follow: Thr110, Thr114, Thr116, Thr118, Thr120, Thr122, Thr124, Thr126, Thr128, Thr130, Thr132, Thr134, and Thr138. 3 repeat units span residues 116-119 (TPTV), 120-123 (TPTV), and 124-127 (TPTV). The segment at 116 to 127 (TPTVTPTVTPTV) is 3 X 4 AA tandem repeats of T-P-T-V. Over residues 116–131 (TPTVTPTVTPTVTPTP) the composition is skewed to low complexity. Positions 116 to 147 (TPTVTPTVTPTVTPTPTNTPNPTPSQTSTTTG) are disordered. O-linked (GlcNAc) serine glycosylation occurs at Ser140. Gly147 carries GPI-like-anchor amidated glycine lipidation. A propeptide spans 148-168 (SASTVVASLSLIIFSMILSLC) (removed in mature form).

This sequence belongs to the ponticulin family. O-glycosylated in the repeat region. The oligosaccharides contain N-acetylglucosamine and fucose as the major constituents. Post-translationally, the GPI-like-anchor contains a phosphoceramide group, rather than a phosphatidyl group.

It localises to the cell membrane. Its function is as follows. May bind F-actin and nucleates actin assembly. This is Prespore-specific protein A (pspA) from Dictyostelium discoideum (Social amoeba).